The chain runs to 295 residues: MSDTPLTFAPKTPLQEFWFYFKQNRGALIGLIFILIVALISILAPYIAPFDPTEQNRTALLLPPAWYEGGNPAYLLGTDDIGRDILSRIIYGTRISVFAGFIIVLLSCAFGTSLGLISGYYGGVLDTIIIRLIDIMLAIPNLLLTIVVVSILEPSLANATLAIAVVSIPSYVRLTRAAMMNEKNRDYVTSSKVAGAGILRLMFIVILPNCLAPLIVQMTMGISNAILELATLGFLGIGAKPPTPELGTMLSEARGFMQAANWLVTIPGLVILSLVLAFNLMGDGLRDALDPKLKQ.

Helical transmembrane passes span 27-47 (ALIGLIFILIVALISILAPYI), 97-117 (VFAGFIIVLLSCAFGTSLGLI), 132-152 (LIDIMLAIPNLLLTIVVVSIL), 156-178 (LANATLAIAVVSIPSYVRLTRAA), 202-222 (MFIVILPNCLAPLIVQMTMGI), 226-246 (ILELATLGFLGIGAKPPTPEL), and 262-282 (WLVTIPGLVILSLVLAFNLMG). The 190-residue stretch at 93-282 (TRISVFAGFI…SLVLAFNLMG (190 aa)) folds into the ABC transmembrane type-1 domain.

This sequence belongs to the binding-protein-dependent transport system permease family. OppBC subfamily.

The protein resides in the cell inner membrane. Its function is as follows. Part of the ABC transporter DppBCDF involved in dipeptide transport. Responsible for the translocation of the substrate across the membrane. This chain is Dipeptide transport system permease protein DppC (dppC), found in Haemophilus influenzae (strain ATCC 51907 / DSM 11121 / KW20 / Rd).